Consider the following 273-residue polypeptide: Histone H1.2 (273 aa).

The interval 1–63 is disordered; it reads MSIEEENVPT…TKKKTTSSHP (63 aa). N-acetylserine is present on Ser2. Ser14 is subject to Phosphoserine. Residues 33-59 are compositionally biased toward basic residues; sequence GKSKKTTTAKATKKPVKAAAPTKKKTT. An H15 domain is found at 61–130; it reads SHPTYEEMIK…KVKASFKIPS (70 aa). Glycyl lysine isopeptide (Lys-Gly) (interchain with G-Cter in ubiquitin) cross-links involve residues Lys156 and Lys165. Composition is skewed to low complexity over residues 193 to 216 and 237 to 256; these read KVTAAKPKSKSVAAVSKTKAVAAK and KKVAAPAKKVAVTKKAPAKS. Residues 193–273 form a disordered region; sequence KVTAAKPKSK…KRASTRKAKK (81 aa). Residues 257–273 are compositionally biased toward basic residues; it reads VKVKSPAKRASTRKAKK.

It belongs to the histone H1/H5 family.

It localises to the nucleus. The protein resides in the chromosome. In terms of biological role, histones H1 are necessary for the condensation of nucleosome chains into higher-order structures. The sequence is that of Histone H1.2 from Arabidopsis thaliana (Mouse-ear cress).